Reading from the N-terminus, the 424-residue chain is Serpin A11 (424 aa).

The N-terminal stretch at 1–21 (MGPVWLWLWLLVAEVLLPVHC) is a signal peptide. Asn108, Asn171, Asn352, and Asn387 each carry an N-linked (GlcNAc...) asparagine glycan.

This sequence belongs to the serpin family.

It is found in the secreted. This chain is Serpin A11 (Serpina11), found in Mus musculus (Mouse).